Here is a 1257-residue protein sequence, read N- to C-terminus: Putative structural protein ORF146 (1257 aa).

This sequence belongs to the ascovirus HvAV ORF146 family.

It localises to the virion. This chain is Putative structural protein ORF146, found in Noctuidae (owlet moths).